Here is a 215-residue protein sequence, read N- to C-terminus: High frequency lysogenization protein HflD homolog (215 aa).

It belongs to the HflD family.

Its subcellular location is the cytoplasm. It is found in the cell inner membrane. This is High frequency lysogenization protein HflD homolog from Haemophilus ducreyi (strain 35000HP / ATCC 700724).